Reading from the N-terminus, the 690-residue chain is MSFFNISRRFYSQIVKKSVKIKRMSVEDIKKARAAVPFNREQLESVLRGRFFYAPAFDLYGGVSGLYDYGPPGCAFQNNIIDAWRKHFILEEDMLEVDCTMLTPYEVLKTSGHVDKFSDWMCRDLKTGEIFRADHLVEEVLEARLKGDQEARGLVEDANAAAKDDAEKKKRKKKVKQIKAVKLDDDVVKEYEEILAKIDGYSGPELGELMEKYDIGNPVTGETLESPRAFNLMFETAIGPSGQLKGYLRPETAQGQFLNFNKLLEFNNSKTPFASASIGKSFRNEISPRAGLLRVREFLMAEIEHFVDPLDKSHPKFNEIKDIKLSFLPRDVQEAGSTEPIVKTVGEAVASRMVDNETLGYFIARIYQFLMKIGVDESKLRFRQHMANEMAHYAADCWDGELKTSYGWIECVGCADRSAYDLTVHSKKTKEKLVVRQKLDNPIEVTKWEIDLTKKLFGPKFRKDAPKVESHLLNMSQDDLASKAELLKANGKFTIKVDGVDGEVELDDKLVKIEQRTKVEHVREYVPSVIEPSFGIGRIIYSVFEHSFWNRPEDNARSVLSFPPLVAPTKVLLVPLSNHKDLVPVTTEVAKILRKSQIPFKIDDSGVSIGKRYARNDELGTPFGVTIDFESAKDHSVTLRERDSTKQVRGSVENVIKAIRDITYNGASWEEGTKDLTPFIAQAEAEAETD.

Residues 1 to 24 constitute a mitochondrion transit peptide; that stretch reads MSFFNISRRFYSQIVKKSVKIKRM. Residue S25 is modified to N-acetylserine. At S226 the chain carries Phosphoserine. Position 251 (E251) interacts with glycine. ATP-binding positions include 283–285 and 294–295; these read RNE and RV. E302 contacts glycine. 410-411 contributes to the ATP binding site; it reads EC. A phosphoserine mark is found at S476 and S528. 531–533 contacts glycine; the sequence is EPS. R538 provides a ligand contact to ATP. Residue T689 is modified to Phosphothreonine.

The protein belongs to the class-II aminoacyl-tRNA synthetase family. Homodimer.

The protein resides in the cytoplasm. The protein localises to the mitochondrion matrix. The enzyme catalyses tRNA(Gly) + glycine + ATP = glycyl-tRNA(Gly) + AMP + diphosphate. The catalysed reaction is 2 ATP + H(+) = P(1),P(4)-bis(5'-adenosyl) tetraphosphate + diphosphate. Functionally, catalyzes the ATP-dependent ligation of glycine to the 3'-end of its cognate tRNA, via the formation of an aminoacyl-adenylate intermediate (Gly-AMP). Also produces diadenosine tetraphosphate (Ap4A), a universal pleiotropic signaling molecule needed for cell regulation pathways, by direct condensation of 2 ATPs. Thereby, may play a special role in Ap4A homeostasis. The chain is Glycine--tRNA ligase 1, mitochondrial (GRS1) from Saccharomyces cerevisiae (strain ATCC 204508 / S288c) (Baker's yeast).